We begin with the raw amino-acid sequence, 101 residues long: NAD(P)H-quinone oxidoreductase subunit 4L, chloroplastic (101 aa).

Transmembrane regions (helical) follow at residues 2-22, 32-52, and 61-81; these read MLEH…YGLI, MCLE…SDFF, and IFSI…LAIV.

The protein belongs to the complex I subunit 4L family. As to quaternary structure, NDH is composed of at least 16 different subunits, 5 of which are encoded in the nucleus.

It localises to the plastid. The protein localises to the chloroplast thylakoid membrane. The enzyme catalyses a plastoquinone + NADH + (n+1) H(+)(in) = a plastoquinol + NAD(+) + n H(+)(out). It catalyses the reaction a plastoquinone + NADPH + (n+1) H(+)(in) = a plastoquinol + NADP(+) + n H(+)(out). Functionally, NDH shuttles electrons from NAD(P)H:plastoquinone, via FMN and iron-sulfur (Fe-S) centers, to quinones in the photosynthetic chain and possibly in a chloroplast respiratory chain. The immediate electron acceptor for the enzyme in this species is believed to be plastoquinone. Couples the redox reaction to proton translocation, and thus conserves the redox energy in a proton gradient. In Cicer arietinum (Chickpea), this protein is NAD(P)H-quinone oxidoreductase subunit 4L, chloroplastic.